Reading from the N-terminus, the 360-residue chain is GTPase Obg (360 aa).

Residues 1-156 enclose the Obg domain; that stretch reads MFVDSVEIII…KCVRLELKLI (156 aa). The OBG-type G domain occupies 157 to 360; the sequence is ADIGLVGFPN…LKFVLLEALP (204 aa). Residues 163 to 170, 188 to 192, 210 to 213, 279 to 282, and 341 to 343 contribute to the GTP site; these read GFPNAGKS, FTTLV, DIPG, NKCD, and SAV. Mg(2+) contacts are provided by serine 170 and threonine 190.

The protein belongs to the TRAFAC class OBG-HflX-like GTPase superfamily. OBG GTPase family. Monomer. It depends on Mg(2+) as a cofactor.

The protein localises to the cytoplasm. Functionally, an essential GTPase which binds GTP, GDP and possibly (p)ppGpp with moderate affinity, with high nucleotide exchange rates and a fairly low GTP hydrolysis rate. Plays a role in control of the cell cycle, stress response, ribosome biogenesis and in those bacteria that undergo differentiation, in morphogenesis control. The protein is GTPase Obg of Helicobacter pylori (strain ATCC 700392 / 26695) (Campylobacter pylori).